The chain runs to 424 residues: uncharacterized protein (424 aa).

Lysine 259 bears the N6-(pyridoxal phosphate)lysine mark.

It belongs to the class-III pyridoxal-phosphate-dependent aminotransferase family. Pyridoxal 5'-phosphate serves as cofactor.

This is an uncharacterized protein from Archaeoglobus fulgidus (strain ATCC 49558 / DSM 4304 / JCM 9628 / NBRC 100126 / VC-16).